Reading from the N-terminus, the 225-residue chain is UPF0758 protein BAV2405 (225 aa).

The region spanning 103–225 is the MPN domain; the sequence is AMKHPEEVRR…ALSMAERGLI (123 aa). Residues histidine 174, histidine 176, and aspartate 187 each coordinate Zn(2+). The JAMM motif motif lies at 174-187; it reads HNHPSGNPQPSAAD.

This sequence belongs to the UPF0758 family.

In Bordetella avium (strain 197N), this protein is UPF0758 protein BAV2405.